Here is a 365-residue protein sequence, read N- to C-terminus: Aminomethyltransferase (365 aa).

The protein belongs to the GcvT family. In terms of assembly, the glycine cleavage system is composed of four proteins: P, T, L and H.

It catalyses the reaction N(6)-[(R)-S(8)-aminomethyldihydrolipoyl]-L-lysyl-[protein] + (6S)-5,6,7,8-tetrahydrofolate = N(6)-[(R)-dihydrolipoyl]-L-lysyl-[protein] + (6R)-5,10-methylene-5,6,7,8-tetrahydrofolate + NH4(+). Functionally, the glycine cleavage system catalyzes the degradation of glycine. This chain is Aminomethyltransferase, found in Erwinia tasmaniensis (strain DSM 17950 / CFBP 7177 / CIP 109463 / NCPPB 4357 / Et1/99).